The following is a 259-amino-acid chain: UPF0246 protein PA14_18590 (259 aa).

This sequence belongs to the UPF0246 family.

This is UPF0246 protein PA14_18590 from Pseudomonas aeruginosa (strain UCBPP-PA14).